The chain runs to 537 residues: MDKHLSPGFASYHAQRILATPNVVTITEVALGIITLYLLGSYIVRRNSLPPGPRGLPIVGNVRDLPTERPWLFWAKHKDIYGPISSITVMGQSFIIVNELQIAIDLLDKKSAIYSDRPRLEFAGEMIGWNRQMILSQYGERFRTMRKFVKEFIGTKAAVVQYRPLQEIETRYFLARVLATPEHLADHLRLTAGAIFLRMSHGYAIDTEKPDALVNLVETAAKEFYIATSPGAWLVDQFPALQKLPNWFPGTHFKKVAAEFFEHNMEQADRPHEFVKRRMNAGTALPSFTSRMLERGLDEKDDEVVRWAANSLYGGGTDTVVASLSAFFLTMVLYPEVQKKAQKEIDTVIGTDRLPTLDDRSRLPYIEAVLKEVLRWHPIGPMGIPHRVTEDDVYNGYLIPKGAIVLPNLWMFAHDPSQYHNADEFKPERYLETDGNVPELDPHALAFGFGRRACPGQELADTNMFLTIAMSLAVFNISKAVDEKGREIEPVNEFSSGTVSHPKPYKCKVTPRSASAEELIRLVGDDHMNRPTDANDL.

The helical transmembrane segment at 23-43 (VVTITEVALGIITLYLLGSYI) threads the bilayer. Position 454 (Cys454) interacts with heme.

Belongs to the cytochrome P450 family. Heme serves as cofactor.

The protein localises to the membrane. It carries out the reaction (2E)-geranylhydroquinone + reduced [NADPH--hemoprotein reductase] + O2 = wigandol + oxidized [NADPH--hemoprotein reductase] + 2 H2O + H(+). Its pathway is secondary metabolite biosynthesis; terpenoid biosynthesis. Functionally, cytochrome P450 monooxygenase; part of the gene cluster that mediates the biosynthesis of clavilactone A, a meroterpenoid that features a unique benzo-fused ten-membered carbocyclic ring unit with an alpha,beta-epoxy-gamma-lactone moiety, forming an intriguing 10/5/3 tricyclic nested skeleton. ClaR, ClaS and ClaT are sufficient to produce clavilactone A. ClaR acts as a macrocyclase to catalyze the oxidative cyclization of the isopentenyl to the nonterpenoid moieties to form the benzo-fused macrocycle, leading to wigantol. The biosynthesis begins with the prenyltransferase claS that transfers geranyl pyrophosphate (GPP) to hydroquinone to produces geranylhydroquinone. The cytochrome P450 monooxygenase claR then catalyzes the diradical coupling reaction between the intramolecular hydroquinone and allyl moieties to form the benzo-fused ten-membered carbocyclic ring unit of wigantol. Finally the cytochrome P450 monooxygenase claT exquisitely and stereoselectively assembles the alpha,beta-epoxy-gamma-lactone moiety, producing clavilactone A via arnebinol A. The chain is Cytochrome P450 monooxygenase claR from Ampulloclitocybe clavipes (Club foot).